The following is a 348-amino-acid chain: D-alanine--D-alanine ligase (348 aa).

One can recognise an ATP-grasp domain in the interval Lys132–Ala334. Glu162 to Glu217 provides a ligand contact to ATP. 3 residues coordinate Mg(2+): Asp288, Glu301, and Asn303.

Belongs to the D-alanine--D-alanine ligase family. It depends on Mg(2+) as a cofactor. Mn(2+) serves as cofactor.

It is found in the cytoplasm. It catalyses the reaction 2 D-alanine + ATP = D-alanyl-D-alanine + ADP + phosphate + H(+). The protein operates within cell wall biogenesis; peptidoglycan biosynthesis. Functionally, cell wall formation. In Streptococcus gordonii (strain Challis / ATCC 35105 / BCRC 15272 / CH1 / DL1 / V288), this protein is D-alanine--D-alanine ligase.